A 445-amino-acid polypeptide reads, in one-letter code: Potassium/proton antiporter CemA (445 aa).

The next 4 membrane-spanning stretches (helical) occupy residues 44–64 (MQVS…VNIC), 330–350 (ALTC…ILIL), 368–388 (LIII…GWKL), and 405–425 (FILC…KYWI).

The protein belongs to the CemA family.

It is found in the plastid. The protein localises to the chloroplast inner membrane. The enzyme catalyses K(+)(in) + H(+)(out) = K(+)(out) + H(+)(in). Its function is as follows. Contributes to K(+)/H(+) antiport activity by supporting proton efflux to control proton extrusion and homeostasis in chloroplasts in a light-dependent manner to modulate photosynthesis. Prevents excessive induction of non-photochemical quenching (NPQ) under continuous-light conditions. Indirectly promotes efficient inorganic carbon uptake into chloroplasts. In Pleurastrum terricola (Filamentous green alga), this protein is Potassium/proton antiporter CemA.